A 184-amino-acid polypeptide reads, in one-letter code: Large ribosomal subunit protein uL18 (184 aa).

This sequence belongs to the universal ribosomal protein uL18 family. As to quaternary structure, part of the 50S ribosomal subunit. Contacts the 5S and 23S rRNAs.

In terms of biological role, this is one of the proteins that bind and probably mediate the attachment of the 5S RNA into the large ribosomal subunit, where it forms part of the central protuberance. The sequence is that of Large ribosomal subunit protein uL18 from Haloferax mediterranei (strain ATCC 33500 / DSM 1411 / JCM 8866 / NBRC 14739 / NCIMB 2177 / R-4) (Halobacterium mediterranei).